Consider the following 70-residue polypeptide: Mu-agatoxin-Ao1b (70 aa).

Positions 1-20 are cleaved as a signal peptide; the sequence is MKAIIFFCFLSVMVFIVAEA. The propeptide occupies 21 to 33; sequence SSLEALKIFEGER. 4 disulfides stabilise this stretch: Cys-35–Cys-50, Cys-42–Cys-55, Cys-49–Cys-65, and Cys-57–Cys-63. Position 69 is an asparagine amide (Asn-69).

It belongs to the neurotoxin 07 (Beta/delta-agtx) family. 04 (aga-5) subfamily. Expressed by the venom gland.

The protein resides in the secreted. Its function is as follows. Insecticidal neurotoxin that modulates the insect Nav channel (DmNaV1/tipE (para/tipE)) in a unique manner, with both the activation and inactivation processes being affected. The voltage dependence of activation is shifted toward more hyperpolarized potentials (analogous to site 4 toxins) and a non-inactivating persistent sodium current is induced (site 3-like action). Interestingly, both effects take place in a voltage-dependent manner, producing a bell-shaped curve between -80 and 0 mV. This chain is Mu-agatoxin-Ao1b, found in Agelena orientalis (Funnel-web spider).